Consider the following 128-residue polypeptide: Lysozyme C-1 (128 aa).

The 128-residue stretch at Lys1–Leu128 folds into the C-type lysozyme domain. 4 cysteine pairs are disulfide-bonded: Cys6–Cys126, Cys30–Cys114, Cys63–Cys79, and Cys75–Cys93. Catalysis depends on residues Glu35 and Asp51.

This sequence belongs to the glycosyl hydrolase 22 family. In terms of assembly, monomer.

The protein resides in the secreted. The catalysed reaction is Hydrolysis of (1-&gt;4)-beta-linkages between N-acetylmuramic acid and N-acetyl-D-glucosamine residues in a peptidoglycan and between N-acetyl-D-glucosamine residues in chitodextrins.. Its function is as follows. Lysozymes have primarily a bacteriolytic function; those in tissues and body fluids are associated with the monocyte-macrophage system and enhance the activity of immunoagents. This chain is Lysozyme C-1, found in Sus scrofa (Pig).